We begin with the raw amino-acid sequence, 351 residues long: Heat-inducible transcription repressor HrcA (351 aa).

This sequence belongs to the HrcA family.

Functionally, negative regulator of class I heat shock genes (grpE-dnaK-dnaJ and groELS operons). Prevents heat-shock induction of these operons. This Beutenbergia cavernae (strain ATCC BAA-8 / DSM 12333 / CCUG 43141 / JCM 11478 / NBRC 16432 / NCIMB 13614 / HKI 0122) protein is Heat-inducible transcription repressor HrcA.